We begin with the raw amino-acid sequence, 115 residues long: Toxin-like structure LSTX-D2 (115 aa).

A signal peptide spans 1–22 (MKVLVLFSVLFLTLFSYSSTEA). Residues 23 to 44 (IDEFDSDAEDDMLSLMANEQVR) constitute a propeptide that is removed on maturation. Disulfide bonds link cysteine 48/cysteine 63, cysteine 55/cysteine 72, cysteine 62/cysteine 87, and cysteine 74/cysteine 85.

It belongs to the neurotoxin 19 (CSTX) family. 01 subfamily. In terms of tissue distribution, expressed by the venom gland.

It localises to the secreted. In Lycosa singoriensis (Wolf spider), this protein is Toxin-like structure LSTX-D2.